The following is a 200-amino-acid chain: Phosphoprotein p30 (200 aa).

It belongs to the asfivirus phosphoprotein p30 family. In terms of assembly, oligomer. Interacts with host HNRNPK. Phosphorylated on serine residues in the 115 N-terminal amino acids.

Its subcellular location is the host cytoplasm. It is found in the host nucleus. The protein resides in the virion. Its function is as follows. Modifies the subcellular distribution of heterogeneous nuclear ribonucleoprotein K (HNRNPK) and may contribute to modulate HNRNPK functions related to processing and export of mRNAs during ASFV infection. Necessary for virus internalization. The chain is Phosphoprotein p30 from African swine fever virus (isolate Tick/Malawi/Lil 20-1/1983) (ASFV).